Reading from the N-terminus, the 38-residue chain is Photosystem II reaction center protein L (38 aa).

The chain crosses the membrane as a helical span at residues 17–37 (SLFWGLLLIFVLAVLFSSYFF).

The protein belongs to the PsbL family. As to quaternary structure, PSII is composed of 1 copy each of membrane proteins PsbA, PsbB, PsbC, PsbD, PsbE, PsbF, PsbH, PsbI, PsbJ, PsbK, PsbL, PsbM, PsbT, PsbX, PsbY, PsbZ, Psb30/Ycf12, at least 3 peripheral proteins of the oxygen-evolving complex and a large number of cofactors. It forms dimeric complexes.

The protein resides in the plastid. It localises to the chloroplast thylakoid membrane. One of the components of the core complex of photosystem II (PSII). PSII is a light-driven water:plastoquinone oxidoreductase that uses light energy to abstract electrons from H(2)O, generating O(2) and a proton gradient subsequently used for ATP formation. It consists of a core antenna complex that captures photons, and an electron transfer chain that converts photonic excitation into a charge separation. This subunit is found at the monomer-monomer interface and is required for correct PSII assembly and/or dimerization. In Porphyra purpurea (Red seaweed), this protein is Photosystem II reaction center protein L.